The chain runs to 120 residues: NAD(P)H-quinone oxidoreductase subunit 3 (120 aa).

3 consecutive transmembrane segments (helical) span residues 10–30 (FLGF…TNLI), 64–84 (MFAL…PWAV), and 89–109 (LGLL…IALA).

It belongs to the complex I subunit 3 family. In terms of assembly, NDH-1 can be composed of about 15 different subunits; different subcomplexes with different compositions have been identified which probably have different functions.

Its subcellular location is the cellular thylakoid membrane. It carries out the reaction a plastoquinone + NADH + (n+1) H(+)(in) = a plastoquinol + NAD(+) + n H(+)(out). It catalyses the reaction a plastoquinone + NADPH + (n+1) H(+)(in) = a plastoquinol + NADP(+) + n H(+)(out). Functionally, NDH-1 shuttles electrons from an unknown electron donor, via FMN and iron-sulfur (Fe-S) centers, to quinones in the respiratory and/or the photosynthetic chain. The immediate electron acceptor for the enzyme in this species is believed to be plastoquinone. Couples the redox reaction to proton translocation, and thus conserves the redox energy in a proton gradient. Cyanobacterial NDH-1 also plays a role in inorganic carbon-concentration. The polypeptide is NAD(P)H-quinone oxidoreductase subunit 3 (Prochlorococcus marinus subsp. pastoris (strain CCMP1986 / NIES-2087 / MED4)).